Reading from the N-terminus, the 142-residue chain is Large ribosomal subunit protein uL13 (142 aa).

The protein belongs to the universal ribosomal protein uL13 family. As to quaternary structure, part of the 50S ribosomal subunit.

Functionally, this protein is one of the early assembly proteins of the 50S ribosomal subunit, although it is not seen to bind rRNA by itself. It is important during the early stages of 50S assembly. The chain is Large ribosomal subunit protein uL13 from Syntrophobacter fumaroxidans (strain DSM 10017 / MPOB).